The primary structure comprises 170 residues: uncharacterized protein (170 aa).

Residues 1–26 form the signal peptide; that stretch reads MLKKKWMVGLLAGCLAAGGFSYNAFA.

This is an uncharacterized protein from Bacillus subtilis (strain 168).